Here is a 145-residue protein sequence, read N- to C-terminus: Basic phospholipase A2 PC17 (145 aa).

An N-terminal signal peptide occupies residues 1–21; it reads MYPAHLLVLLAVCVSLLGASA. The propeptide occupies 22–27; the sequence is ISNQPR. Intrachain disulfides connect Cys-38–Cys-98, Cys-54–Cys-144, Cys-56–Cys-72, Cys-71–Cys-125, Cys-78–Cys-118, Cys-87–Cys-111, and Cys-105–Cys-116. Residues Tyr-55, Gly-57, and Gly-59 each contribute to the Ca(2+) site. His-75 is a catalytic residue. Asp-76 is a Ca(2+) binding site. Residue Asp-119 is part of the active site.

It belongs to the phospholipase A2 family. Group I subfamily. D49 sub-subfamily. Ca(2+) serves as cofactor. As to expression, expressed by the venom gland.

Its subcellular location is the secreted. It catalyses the reaction a 1,2-diacyl-sn-glycero-3-phosphocholine + H2O = a 1-acyl-sn-glycero-3-phosphocholine + a fatty acid + H(+). Its function is as follows. Snake venom phospholipase A2 (PLA2) that inhibits neuromuscular transmission by blocking acetylcholine release from the nerve termini. PLA2 catalyzes the calcium-dependent hydrolysis of the 2-acyl groups in 3-sn-phosphoglycerides. This is Basic phospholipase A2 PC17 from Laticauda colubrina (Yellow-lipped sea krait).